Here is a 469-residue protein sequence, read N- to C-terminus: Beta-1,3-xylanase (469 aa).

The first 22 residues, 1 to 22, serve as a signal peptide directing secretion; that stretch reads MKKLAKMISIATLGACAFSAHA. The region spanning 23-293 is the GH26 domain; that stretch reads LDGKLVPNEG…LKGFTYINAD (271 aa). Glu-138 serves as the catalytic Proton donor. The active-site Nucleophile is the Glu-234. Residues 352–374 show a composition bias toward gly residues; that stretch reads DNGGDNGGDNGGDNGGDNGGDNG. Positions 352 to 380 are disordered; that stretch reads DNGGDNGGDNGGDNGGDNGGDNGGTEPPE. The segment at 377–469 is carbohydrate binding module (CBM); it reads EPPENCQDDF…NITFTTQVCN (93 aa). Disulfide bonds link Cys-382/Cys-468 and Cys-413/Cys-418.

This sequence belongs to the glycosyl hydrolase 26 family.

The enzyme catalyses Random hydrolysis of (1-&gt;3)-beta-D-glycosidic linkages in (1-&gt;3)-beta-D-xylans.. With respect to regulation, completely inhibited by CuCl(2), FeCl(3), HgCl(2) and N-bromosuccinimide. Moderately inhibited by AgCl, AlCl(3), Pb(CH(3)COO)(2) and dithiothreitol. BaCl(2), CaCl(2), KCl, MgCl(2), MnCl(2), NaCl, ZnCl(2), ethylenediaminetetraacetic acid, N-ethylmaleimide, iodoacetic acid and p-chloromercuribenzoic acid have little or no effect on activity. Its function is as follows. Catalyzes the hydrolysis of beta-1,3-xylan into oligosaccharides, mainly xylotriose and xylobiose with smaller amounts of xylotetraose, xylose, xylopentaose and xylohexaose. Does not hydrolyze xylobiose, p-nitrophenyl-beta-xyloside, beta-1,4-xylan, carboxymethylcellulose, curdlan, glucomannan or beta-1,4-mannan. The chain is Beta-1,3-xylanase from Alcaligenes sp.